We begin with the raw amino-acid sequence, 219 residues long: uncharacterized protein (219 aa).

Residues 1–17 (MFKKIIILFLGIFLLSS) form the signal peptide. A lipid anchor (N-palmitoyl cysteine) is attached at Cys-18. Cys-18 is lipidated: S-diacylglycerol cysteine. The segment at 110–136 (KAESNATQSNNDMTLSKANKKVRKDDS) is disordered. Positions 112–126 (ESNATQSNNDMTLSK) are enriched in polar residues. Positions 137 to 165 (YKEKKIEEELNQIKAMLRETKRDITKYTC) form a coiled coil.

It localises to the cell membrane. This is an uncharacterized protein from Rickettsia prowazekii (strain Madrid E).